Consider the following 186-residue polypeptide: Ribosome-recycling factor (186 aa).

The protein belongs to the RRF family.

Its subcellular location is the cytoplasm. In terms of biological role, responsible for the release of ribosomes from messenger RNA at the termination of protein biosynthesis. May increase the efficiency of translation by recycling ribosomes from one round of translation to another. The polypeptide is Ribosome-recycling factor (Rubrobacter xylanophilus (strain DSM 9941 / JCM 11954 / NBRC 16129 / PRD-1)).